A 673-amino-acid polypeptide reads, in one-letter code: Putative lipase atg15 (673 aa).

Residues 1–7 are Cytoplasmic-facing; that stretch reads MPRKRSR. A helical; Signal-anchor for type II membrane protein transmembrane segment spans residues 8–28; that stretch reads FELSIHSLLLSVAVLSGAAYA. The Lumenal segment spans residues 29–673; it reads SGYYPPSQQV…AVTSAPTPTS (645 aa). N-linked (GlcNAc...) asparagine glycans are attached at residues Asn-156, Asn-191, Asn-213, Asn-271, and Asn-295. Ser-311 acts as the Charge relay system in catalysis. Residue Asn-457 is glycosylated (N-linked (GlcNAc...) asparagine).

This sequence belongs to the AB hydrolase superfamily. Lipase family. Binds to both phosphatidylinositol (PI) and phosphatidylinositol 3,5-bisphosphate (PIP2).

It localises to the endosome. It is found in the multivesicular body membrane. Its subcellular location is the prevacuolar compartment membrane. It catalyses the reaction a triacylglycerol + H2O = a diacylglycerol + a fatty acid + H(+). Lipase which is essential for lysis of subvacuolar cytoplasm to vacuole targeted bodies and intravacuolar autophagic bodies. Involved in the lysis of intravacuolar multivesicular body (MVB) vesicles. The intravacuolar membrane disintegration by atg15 is critical to life span extension. The polypeptide is Putative lipase atg15 (atg15) (Penicillium rubens (strain ATCC 28089 / DSM 1075 / NRRL 1951 / Wisconsin 54-1255) (Penicillium chrysogenum)).